A 482-amino-acid chain; its full sequence is UDP-N-acetylmuramoyl-L-alanyl-D-glutamate--2,6-diaminopimelate ligase (482 aa).

S29 contributes to the UDP-N-acetyl-alpha-D-muramoyl-L-alanyl-D-glutamate binding site. 109-115 (GTNGKTS) contributes to the ATP binding site. Residues 151-152 (TT), S178, and R186 contribute to the UDP-N-acetyl-alpha-D-muramoyl-L-alanyl-D-glutamate site. K218 bears the N6-carboxylysine mark. Meso-2,6-diaminopimelate-binding positions include R375, 399–402 (DNPR), G451, and E455. The Meso-diaminopimelate recognition motif motif lies at 399 to 402 (DNPR).

This sequence belongs to the MurCDEF family. MurE subfamily. Mg(2+) serves as cofactor. Post-translationally, carboxylation is probably crucial for Mg(2+) binding and, consequently, for the gamma-phosphate positioning of ATP.

The protein resides in the cytoplasm. The catalysed reaction is UDP-N-acetyl-alpha-D-muramoyl-L-alanyl-D-glutamate + meso-2,6-diaminopimelate + ATP = UDP-N-acetyl-alpha-D-muramoyl-L-alanyl-gamma-D-glutamyl-meso-2,6-diaminopimelate + ADP + phosphate + H(+). It participates in cell wall biogenesis; peptidoglycan biosynthesis. Its function is as follows. Catalyzes the addition of meso-diaminopimelic acid to the nucleotide precursor UDP-N-acetylmuramoyl-L-alanyl-D-glutamate (UMAG) in the biosynthesis of bacterial cell-wall peptidoglycan. This is UDP-N-acetylmuramoyl-L-alanyl-D-glutamate--2,6-diaminopimelate ligase from Caldanaerobacter subterraneus subsp. tengcongensis (strain DSM 15242 / JCM 11007 / NBRC 100824 / MB4) (Thermoanaerobacter tengcongensis).